The primary structure comprises 341 residues: MSQPDPMLRPEPLESDGEDRALRPQRLEDFVGQAEARANLRVFIESARMRGKAMDHTLFHGPPGLGKTTLAQIMARELGVNFKMTSGPVLARAGDLAAILTNLEARDVLFIDEIHRMNPAVEEILYPAMEDFELDLVIGEGPAARTVRIELQPFTLVGATTRLGLLTTPLRDRFGIPTRLQFYTIEELDLIVTRGARLMGIPSEPEGTREIARRARGTPRIAGRLLRRVVDFALVEGDGRLTRKIADSALTRLGVDHLGLDTADRRYLTLMAEHYGGGPVGVETLSAALSESRDSIEEVIEPYLMQQGLVSRTPRGRMLARLGWRHLGLDAPRTQESLFDE.

Positions M1–A21 are disordered. The large ATPase domain (RuvB-L) stretch occupies residues P4 to Y183. Residues L22, R23, G64, K67, T68, T69, E130–F132, R173, Y183, and R220 each bind ATP. A Mg(2+)-binding site is contributed by T68. A small ATPAse domain (RuvB-S) region spans residues T184–G254. The tract at residues H257–E341 is head domain (RuvB-H). Residues R293, R312, and R317 each coordinate DNA.

The protein belongs to the RuvB family. In terms of assembly, homohexamer. Forms an RuvA(8)-RuvB(12)-Holliday junction (HJ) complex. HJ DNA is sandwiched between 2 RuvA tetramers; dsDNA enters through RuvA and exits via RuvB. An RuvB hexamer assembles on each DNA strand where it exits the tetramer. Each RuvB hexamer is contacted by two RuvA subunits (via domain III) on 2 adjacent RuvB subunits; this complex drives branch migration. In the full resolvosome a probable DNA-RuvA(4)-RuvB(12)-RuvC(2) complex forms which resolves the HJ.

It localises to the cytoplasm. The catalysed reaction is ATP + H2O = ADP + phosphate + H(+). Its function is as follows. The RuvA-RuvB-RuvC complex processes Holliday junction (HJ) DNA during genetic recombination and DNA repair, while the RuvA-RuvB complex plays an important role in the rescue of blocked DNA replication forks via replication fork reversal (RFR). RuvA specifically binds to HJ cruciform DNA, conferring on it an open structure. The RuvB hexamer acts as an ATP-dependent pump, pulling dsDNA into and through the RuvAB complex. RuvB forms 2 homohexamers on either side of HJ DNA bound by 1 or 2 RuvA tetramers; 4 subunits per hexamer contact DNA at a time. Coordinated motions by a converter formed by DNA-disengaged RuvB subunits stimulates ATP hydrolysis and nucleotide exchange. Immobilization of the converter enables RuvB to convert the ATP-contained energy into a lever motion, pulling 2 nucleotides of DNA out of the RuvA tetramer per ATP hydrolyzed, thus driving DNA branch migration. The RuvB motors rotate together with the DNA substrate, which together with the progressing nucleotide cycle form the mechanistic basis for DNA recombination by continuous HJ branch migration. Branch migration allows RuvC to scan DNA until it finds its consensus sequence, where it cleaves and resolves cruciform DNA. The sequence is that of Holliday junction branch migration complex subunit RuvB from Paracoccus denitrificans (strain Pd 1222).